We begin with the raw amino-acid sequence, 378 residues long: GTP cyclohydrolase-2 (378 aa).

Residues 1 to 180 (MEEVSSHVKS…IKDMIEFRIK (180 aa)) form a DHBP synthase-like region. The segment at 181–378 (SEKIVERVIE…KMGHLICFND (198 aa)) is GTP cyclohydrolase II. 229-233 (RIHSE) contacts GTP. Zn(2+) contacts are provided by C234, C245, and C247. Residues Q250, 273–275 (EGR), and T295 contribute to the GTP site. D307 functions as the Proton acceptor in the catalytic mechanism. The active-site Nucleophile is R309. GTP contacts are provided by T330 and K335.

This sequence in the N-terminal section; belongs to the DHBP synthase family. In the C-terminal section; belongs to the GTP cyclohydrolase II family. The cofactor is Zn(2+).

It carries out the reaction GTP + 4 H2O = 2,5-diamino-6-hydroxy-4-(5-phosphoribosylamino)-pyrimidine + formate + 2 phosphate + 3 H(+). Its pathway is cofactor biosynthesis; riboflavin biosynthesis; 5-amino-6-(D-ribitylamino)uracil from GTP: step 1/4. Its function is as follows. Catalyzes the conversion of GTP to 2,5-diamino-6-ribosylamino-4(3H)-pyrimidinone 5'-phosphate (DARP), formate and pyrophosphate. This is GTP cyclohydrolase-2 (ribA) from Archaeoglobus fulgidus (strain ATCC 49558 / DSM 4304 / JCM 9628 / NBRC 100126 / VC-16).